Here is a 304-residue protein sequence, read N- to C-terminus: GTP cyclohydrolase FolE2 (304 aa).

It belongs to the GTP cyclohydrolase IV family.

The enzyme catalyses GTP + H2O = 7,8-dihydroneopterin 3'-triphosphate + formate + H(+). The protein operates within cofactor biosynthesis; 7,8-dihydroneopterin triphosphate biosynthesis; 7,8-dihydroneopterin triphosphate from GTP: step 1/1. Functionally, converts GTP to 7,8-dihydroneopterin triphosphate. This chain is GTP cyclohydrolase FolE2, found in Hahella chejuensis (strain KCTC 2396).